The primary structure comprises 427 residues: Serine hydroxymethyltransferase (427 aa).

(6S)-5,6,7,8-tetrahydrofolate contacts are provided by residues leucine 118 and 122–124 (GHL). An N6-(pyridoxal phosphate)lysine modification is found at lysine 227. (6S)-5,6,7,8-tetrahydrofolate is bound by residues glutamate 243 and 351 to 353 (SPF).

The protein belongs to the SHMT family. In terms of assembly, homodimer. Requires pyridoxal 5'-phosphate as cofactor.

The protein resides in the cytoplasm. It catalyses the reaction (6R)-5,10-methylene-5,6,7,8-tetrahydrofolate + glycine + H2O = (6S)-5,6,7,8-tetrahydrofolate + L-serine. Its pathway is one-carbon metabolism; tetrahydrofolate interconversion. The protein operates within amino-acid biosynthesis; glycine biosynthesis; glycine from L-serine: step 1/1. In terms of biological role, catalyzes the reversible interconversion of serine and glycine with tetrahydrofolate (THF) serving as the one-carbon carrier. This reaction serves as the major source of one-carbon groups required for the biosynthesis of purines, thymidylate, methionine, and other important biomolecules. Also exhibits THF-independent aldolase activity toward beta-hydroxyamino acids, producing glycine and aldehydes, via a retro-aldol mechanism. The sequence is that of Serine hydroxymethyltransferase from Thermotoga neapolitana (strain ATCC 49049 / DSM 4359 / NBRC 107923 / NS-E).